A 353-amino-acid chain; its full sequence is Photosystem II protein D1 (353 aa).

T2 is subject to N-acetylthreonine. Phosphothreonine is present on T2. The next 3 membrane-spanning stretches (helical) occupy residues 29–46, 118–133, and 142–156; these read YIGW…TATS, HFLL…EWEL, and WIAV…AATA. Residue H118 coordinates chlorophyll a. Y126 is a binding site for pheophytin a. [CaMn4O5] cluster is bound by residues D170 and E189. The chain crosses the membrane as a helical span at residues 197 to 218; it reads FHMLGVAGVFGGSLFSAMHGSL. Position 198 (H198) interacts with chlorophyll a. A quinone is bound by residues H215 and 264 to 265; that span reads SF. Position 215 (H215) interacts with Fe cation. H272 lines the Fe cation pocket. The helical transmembrane segment at 274–288 threads the bilayer; that stretch reads FLAAWPVVGIWFTAL. [CaMn4O5] cluster contacts are provided by H332, E333, D342, and A344. The propeptide occupies 345-353; it reads ALEVPSLNG.

The protein belongs to the reaction center PufL/M/PsbA/D family. In terms of assembly, PSII is composed of 1 copy each of membrane proteins PsbA, PsbB, PsbC, PsbD, PsbE, PsbF, PsbH, PsbI, PsbJ, PsbK, PsbL, PsbM, PsbT, PsbX, PsbY, PsbZ, Psb30/Ycf12, at least 3 peripheral proteins of the oxygen-evolving complex and a large number of cofactors. It forms dimeric complexes. The cofactor is The D1/D2 heterodimer binds P680, chlorophylls that are the primary electron donor of PSII, and subsequent electron acceptors. It shares a non-heme iron and each subunit binds pheophytin, quinone, additional chlorophylls, carotenoids and lipids. D1 provides most of the ligands for the Mn4-Ca-O5 cluster of the oxygen-evolving complex (OEC). There is also a Cl(-1) ion associated with D1 and D2, which is required for oxygen evolution. The PSII complex binds additional chlorophylls, carotenoids and specific lipids.. In terms of processing, tyr-161 forms a radical intermediate that is referred to as redox-active TyrZ, YZ or Y-Z. C-terminally processed by CTPA; processing is essential to allow assembly of the oxygen-evolving complex and thus photosynthetic growth.

It is found in the plastid. The protein localises to the chloroplast thylakoid membrane. It carries out the reaction 2 a plastoquinone + 4 hnu + 2 H2O = 2 a plastoquinol + O2. Its function is as follows. Photosystem II (PSII) is a light-driven water:plastoquinone oxidoreductase that uses light energy to abstract electrons from H(2)O, generating O(2) and a proton gradient subsequently used for ATP formation. It consists of a core antenna complex that captures photons, and an electron transfer chain that converts photonic excitation into a charge separation. The D1/D2 (PsbA/PsbD) reaction center heterodimer binds P680, the primary electron donor of PSII as well as several subsequent electron acceptors. The protein is Photosystem II protein D1 of Oryza nivara (Indian wild rice).